The following is a 135-amino-acid chain: Global transcriptional regulator Spx 2 (135 aa).

The active site involves cysteine 10.

This sequence belongs to the ArsC family. Spx subfamily. Interacts with the C-terminal domain of the alpha subunit of the RNAP.

The protein resides in the cytoplasm. Global transcriptional regulator that plays a key role in stress response and exerts either positive or negative regulation of genes. Acts by interacting with the C-terminal domain of the alpha subunit of the RNA polymerase (RNAP). This interaction can enhance binding of RNAP to the promoter region of target genes and stimulate their transcription, or block interaction of RNAP with activator. In Oceanobacillus iheyensis (strain DSM 14371 / CIP 107618 / JCM 11309 / KCTC 3954 / HTE831), this protein is Global transcriptional regulator Spx 2.